The following is a 137-amino-acid chain: Large-conductance mechanosensitive channel (137 aa).

2 helical membrane passes run 9 to 29 (AFAV…GAAF) and 79 to 99 (IQTI…VKVI).

This sequence belongs to the MscL family. In terms of assembly, homopentamer.

The protein localises to the cell inner membrane. Channel that opens in response to stretch forces in the membrane lipid bilayer. May participate in the regulation of osmotic pressure changes within the cell. This chain is Large-conductance mechanosensitive channel, found in Pseudomonas entomophila (strain L48).